Reading from the N-terminus, the 120-residue chain is Small ribosomal subunit protein uS13 (120 aa).

Positions 92 to 120 (HRKGLPVRGQTTKNNARTRKGKKKTVGSK) are disordered. Over residues 107–120 (ARTRKGKKKTVGSK) the composition is skewed to basic residues.

The protein belongs to the universal ribosomal protein uS13 family. As to quaternary structure, part of the 30S ribosomal subunit. Forms a loose heterodimer with protein S19. Forms two bridges to the 50S subunit in the 70S ribosome.

Functionally, located at the top of the head of the 30S subunit, it contacts several helices of the 16S rRNA. In the 70S ribosome it contacts the 23S rRNA (bridge B1a) and protein L5 of the 50S subunit (bridge B1b), connecting the 2 subunits; these bridges are implicated in subunit movement. Contacts the tRNAs in the A and P-sites. This chain is Small ribosomal subunit protein uS13, found in Helicobacter hepaticus (strain ATCC 51449 / 3B1).